The sequence spans 233 residues: Adenosine 5'-phosphosulfate reductase (233 aa).

[4Fe-4S] cluster is bound by residues Cys120, Cys121, Cys203, and Cys206. Catalysis depends on Cys229, which acts as the Nucleophile; cysteine thiosulfonate intermediate.

Belongs to the PAPS reductase family. CysH subfamily. Requires [4Fe-4S] cluster as cofactor.

The protein resides in the cytoplasm. The enzyme catalyses [thioredoxin]-disulfide + sulfite + AMP + 2 H(+) = adenosine 5'-phosphosulfate + [thioredoxin]-dithiol. The protein operates within sulfur metabolism; hydrogen sulfide biosynthesis; sulfite from sulfate. In terms of biological role, catalyzes the formation of sulfite from adenosine 5'-phosphosulfate (APS) using thioredoxin as an electron donor. The sequence is that of Adenosine 5'-phosphosulfate reductase from Lysinibacillus sphaericus (strain C3-41).